Reading from the N-terminus, the 228-residue chain is Transcription factor zip-11 (228 aa).

The tract at residues 166-202 (RKRQQNKVAAARYRDKQKAKWQDLLDQLEAEEDRNQR) is basic motif. The 59-residue stretch at 166 to 224 (RKRQQNKVAAARYRDKQKAKWQDLLDQLEAEEDRNQRLKLQAGHLEKEVAEMRQAFLAK) folds into the bZIP domain. The interval 203 to 210 (LKLQAGHL) is leucine-zipper.

Belongs to the bZIP family. Interacts with CCAAT/enhancer-binding protein cebp-2.

It is found in the nucleus. In terms of biological role, transcription factor. Involved in modulating innate immune response pathways, acting to promote resistance against infection by Gram-negative bacterium P.aeruginosa strain PA14. May act as part of a feedback regulatory loop with the pmk-1/p38 MAPK pathway. May also function in concert with CCAAT/enhancer-binding protein cebp-2 to mediate immune responses, independently of the pmk-1/p38 MAPK pathway. This is Transcription factor zip-11 from Caenorhabditis elegans.